The following is a 471-amino-acid chain: NADH-quinone oxidoreductase subunit N 1 (471 aa).

14 helical membrane passes run 11 to 31 (ALVP…AGAW), 39 to 59 (TIHV…ALAA), 81 to 101 (AIVL…VAGH), 105 to 125 (TEFV…AGAG), 127 to 147 (LIML…LAGW), 162 to 182 (LAGA…FGVA), 200 to 220 (AAAA…AGAV), 234 to 254 (PPPV…VAFY), 270 to 290 (LITA…AFAQ), 296 to 316 (MLGY…AVAG), 324 to 344 (ALLL…AVVA), 365 to 385 (ALAL…AVFV), 398 to 418 (GLAW…FYYL), and 444 to 464 (AVAL…GIVL).

It belongs to the complex I subunit 2 family. In terms of assembly, NDH-1 is composed of 14 different subunits. Subunits NuoA, H, J, K, L, M, N constitute the membrane sector of the complex.

The protein resides in the cell membrane. The catalysed reaction is a quinone + NADH + 5 H(+)(in) = a quinol + NAD(+) + 4 H(+)(out). In terms of biological role, NDH-1 shuttles electrons from NADH, via FMN and iron-sulfur (Fe-S) centers, to quinones in the respiratory chain. The immediate electron acceptor for the enzyme in this species is believed to be a menaquinone. Couples the redox reaction to proton translocation (for every two electrons transferred, four hydrogen ions are translocated across the cytoplasmic membrane), and thus conserves the redox energy in a proton gradient. This chain is NADH-quinone oxidoreductase subunit N 1, found in Streptomyces griseus subsp. griseus (strain JCM 4626 / CBS 651.72 / NBRC 13350 / KCC S-0626 / ISP 5235).